Reading from the N-terminus, the 279-residue chain is Diaminopimelate epimerase (279 aa).

Residues Asn-13 and Asn-66 each coordinate substrate. Cys-75 serves as the catalytic Proton donor. Residues 76–77, Asn-162, Asn-195, and 213–214 each bind substrate; these read GN and ER. The Proton acceptor role is filled by Cys-222. Position 223-224 (223-224) interacts with substrate; the sequence is GT.

This sequence belongs to the diaminopimelate epimerase family. Homodimer.

It localises to the cytoplasm. The catalysed reaction is (2S,6S)-2,6-diaminopimelate = meso-2,6-diaminopimelate. The protein operates within amino-acid biosynthesis; L-lysine biosynthesis via DAP pathway; DL-2,6-diaminopimelate from LL-2,6-diaminopimelate: step 1/1. Catalyzes the stereoinversion of LL-2,6-diaminopimelate (L,L-DAP) to meso-diaminopimelate (meso-DAP), a precursor of L-lysine and an essential component of the bacterial peptidoglycan. In Synechocystis sp. (strain ATCC 27184 / PCC 6803 / Kazusa), this protein is Diaminopimelate epimerase.